The following is a 69-amino-acid chain: Large ribosomal subunit protein uL29 (69 aa).

This sequence belongs to the universal ribosomal protein uL29 family.

The chain is Large ribosomal subunit protein uL29 from Lachnoclostridium phytofermentans (strain ATCC 700394 / DSM 18823 / ISDg) (Clostridium phytofermentans).